The chain runs to 372 residues: Cytochrome b (372 aa).

4 helical membrane-spanning segments follow: residues 25–45, 69–90, 105–125, and 170–190; these read FGSM…FLAI, WIMQ…YIHI, WLSG…GYVL, and FFAL…IHIM. The heme b site is built by H75 and H89. The heme b site is built by H174 and H188. H193 serves as a coordination point for a ubiquinone. 4 consecutive transmembrane segments (helical) span residues 218–238, 280–300, 312–332, and 339–358; these read YKDM…LSFS, LGGT…PFTH, LSQI…WTAS, and FILI…IMAP.

Belongs to the cytochrome b family. As to quaternary structure, the cytochrome bc1 complex contains 3 respiratory subunits (MT-CYB, CYC1 and UQCRFS1), 2 core proteins (UQCRC1 and UQCRC2) and probably 6 low-molecular weight proteins. It depends on heme b as a cofactor.

Its subcellular location is the mitochondrion inner membrane. Component of the ubiquinol-cytochrome c reductase complex (complex III or cytochrome b-c1 complex) that is part of the mitochondrial respiratory chain. The b-c1 complex mediates electron transfer from ubiquinol to cytochrome c. Contributes to the generation of a proton gradient across the mitochondrial membrane that is then used for ATP synthesis. This is Cytochrome b (MT-CYB) from Hemachatus haemachatus (Rinkhals).